The chain runs to 553 residues: Membrane protein insertase YidC (553 aa).

A helical transmembrane segment spans residues 3 to 23 (IKRTILWVIFSLSVVLLFDNW). The interval 44 to 64 (AAAPGGTPAGDVPKAAAPAAA) is disordered. The next 4 helical transmembrane spans lie at 359 to 379 (LLGNWGWSIVALTVLVKLVFF), 429 to 449 (LGGCLPIVIQIPVFIALYWVL), 467 to 487 (LASPDPFYILPILMAVSMFVQ), and 507 to 527 (PIAFSVMFFFFPAGLVLYWVV).

The protein belongs to the OXA1/ALB3/YidC family. Type 1 subfamily. In terms of assembly, interacts with the Sec translocase complex via SecD. Specifically interacts with transmembrane segments of nascent integral membrane proteins during membrane integration.

Its subcellular location is the cell inner membrane. Functionally, required for the insertion and/or proper folding and/or complex formation of integral membrane proteins into the membrane. Involved in integration of membrane proteins that insert both dependently and independently of the Sec translocase complex, as well as at least some lipoproteins. Aids folding of multispanning membrane proteins. This is Membrane protein insertase YidC from Ralstonia nicotianae (strain ATCC BAA-1114 / GMI1000) (Ralstonia solanacearum).